A 297-amino-acid polypeptide reads, in one-letter code: MEEFDSEDFSTSEEDEDYVPSGGEYSEDDVNELVKEDEVDGEEQTQKTKGKKRKAQSIPARKRKQGLSLEEEEEDANEESGGSSSEEEDAAAEQEKGIGAEDARKKKEDELWASFLNDVGPKSKVPPSTQVKREEETEETGSSKLLVKAEELEKPKETEKVKITKVFDFAGEEVRVTKEVDATSKEAKSFFKQNEKEKPQTNVPAALPSLPAGSGLKRSSGMSNLLGKIGAKKQKMSTLEKSKLDWESFKEEEGIGEELAIHNRGKEGYIERKAFLDRVDHRQFEIERDLRLSKMKP.

Composition is skewed to acidic residues over residues 1-18 and 25-43; these read MEEF…DEDY and YSED…DGEE. Disordered regions lie at residues 1 to 154 and 190 to 221; these read MEEF…ELEK and FFKQ…RSSG. Over residues 48–65 the composition is skewed to basic residues; it reads TKGKKRKAQSIPARKRKQ. A compositionally biased stretch (acidic residues) spans 69 to 78; it reads LEEEEEDANE. Ser80, Ser83, and Ser84 each carry phosphoserine. Positions 93–110 are enriched in basic and acidic residues; it reads EQEKGIGAEDARKKKEDE. Ser114 bears the Phosphoserine mark. A Glycyl lysine isopeptide (Lys-Gly) (interchain with G-Cter in SUMO2) cross-link involves residue Lys148. The segment at 176-215 is hydrophilic; sequence VTKEVDATSKEAKSFFKQNEKEKPQTNVPAALPSLPAGSG. Residues 190–199 show a composition bias toward basic and acidic residues; the sequence is FFKQNEKEKP. A Phosphoserine modification is found at Ser214. The BCNT-C domain occupies 216-297; sequence LKRSSGMSNL…RDLRLSKMKP (82 aa). Lys217 is subject to N6-methyllysine. Position 248 is a phosphoserine (Ser248).

Its subcellular location is the chromosome. The protein resides in the centromere. The protein localises to the kinetochore. May play a role during embryogenesis. This Camelus dromedarius (Dromedary) protein is Craniofacial development protein 1 (CFDP1).